Here is a 271-residue protein sequence, read N- to C-terminus: MTEVRRRGRPGQAEPVAQKGAQALERGIAILQYLEKSGGSSSVSDISLNLDLPLSTTFRLLKVLQAADFVYQDSQLGWWHIGLGVFNVGAAYIHNRDVLSVAGPFMRRLMLLSGETVNVAIRNGNEAVLIGQLECKSMVRMCAPLGSRLPLHASGAGKALLYPLAEEELMSIILQTGLQQFTPTTLVDMPTLLKDLEQARELGYTVDKEEHVVGLNCIASAIYDDVGSVVAAISISGPSSRLTEDRFVSQGELVRDTARDISTALGLKAHP.

The region spanning 21-83 (AQALERGIAI…SQLGWWHIGL (63 aa)) is the HTH iclR-type domain. The segment at residues 43–62 (VSDISLNLDLPLSTTFRLLK) is a DNA-binding region (H-T-H motif). The IclR-ED domain occupies 98-267 (VLSVAGPFMR…ARDISTALGL (170 aa)). Residues 154–156 (SGA), Asp207, Cys217, and 234–236 (SIS) contribute to the glyoxylate site.

Functionally, negative regulator of allantoin and glyoxylate utilization operons. Binds to the gcl promoter and to the allS-allA intergenic region. This chain is HTH-type transcriptional repressor AllR (allR), found in Escherichia coli O6:H1 (strain CFT073 / ATCC 700928 / UPEC).